The sequence spans 545 residues: T-complex protein 1 subunit alpha (545 aa).

At S2 the chain carries N-acetylserine.

It belongs to the TCP-1 chaperonin family. In terms of assembly, heterooligomeric complex of about 850 to 900 kDa that forms two stacked rings, 12 to 16 nm in diameter.

The protein resides in the cytoplasm. Molecular chaperone; assists the folding of proteins upon ATP hydrolysis. Known to play a role, in vitro, in the folding of actin and tubulin. This chain is T-complex protein 1 subunit alpha, found in Arabidopsis thaliana (Mouse-ear cress).